The primary structure comprises 316 residues: Dof zinc finger protein DOF5.7 (316 aa).

A disordered region spans residues 1-42 (MSSHTNLPSPKPVPKPDHRISGTSQTKKPPSSSVAQDQQNLK). The span at 21-42 (SGTSQTKKPPSSSVAQDQQNLK) shows a compositional bias: polar residues. The segment at 41–95 (LKCPRCNSPNTKFCYYNNYSLSQPRHFCKSCRRYWTRGGALRNVPIGGGCRKTKK) adopts a Dof-type zinc-finger fold. Positions 43, 46, 68, and 71 each coordinate Zn(2+). Disordered stretches follow at residues 92–111 (KTKK…SSSS) and 257–294 (NSSS…NTGG). The span at 101–111 (SSMNTLPSSSS) shows a compositional bias: low complexity. Over residues 257–291 (NSSSPSSPTKKGDNQTEWYFGNNSDNEGVISNNAN) the composition is skewed to polar residues.

It localises to the nucleus. In terms of biological role, transcription factor that binds specifically to a 5'-AA[AG]G-3' consensus core sequence. The sequence is that of Dof zinc finger protein DOF5.7 (DOF5.7) from Arabidopsis thaliana (Mouse-ear cress).